The following is a 361-amino-acid chain: Polygalacturonase (361 aa).

The first 18 residues, 1–18 (MISANSLLISTLCAFAIA), serve as a signal peptide directing secretion. Residues Cys-27 and Cys-43 are joined by a disulfide bond. 5 PbH1 repeats span residues 155 to 185 (CSDL…DVGS), 186 to 207 (SSNV…AVNS), 208 to 228 (GSTI…SVGS), 237 to 258 (VNGF…RIKT), and 266 to 288 (VTNV…VIEG). The active-site Proton donor is the Asp-200. A disulfide bridge links Cys-202 with Cys-218. Residue His-222 is part of the active site. N-linked (GlcNAc...) asparagine glycosylation is found at Asn-318 and Asn-330. Cys-350 and Cys-361 are disulfide-bonded.

The protein belongs to the glycosyl hydrolase 28 family.

The catalysed reaction is (1,4-alpha-D-galacturonosyl)n+m + H2O = (1,4-alpha-D-galacturonosyl)n + (1,4-alpha-D-galacturonosyl)m.. The protein is Polygalacturonase (PGU1) of Saccharomyces cerevisiae (strain ATCC 204508 / S288c) (Baker's yeast).